We begin with the raw amino-acid sequence, 445 residues long: Phosphoglucosamine mutase (445 aa).

Ser102 serves as the catalytic Phosphoserine intermediate. The Mg(2+) site is built by Ser102, Asp241, Asp243, and Asp245. Ser102 is subject to Phosphoserine.

It belongs to the phosphohexose mutase family. Mg(2+) is required as a cofactor. In terms of processing, activated by phosphorylation.

The enzyme catalyses alpha-D-glucosamine 1-phosphate = D-glucosamine 6-phosphate. Catalyzes the conversion of glucosamine-6-phosphate to glucosamine-1-phosphate. The chain is Phosphoglucosamine mutase from Rhodococcus jostii (strain RHA1).